A 560-amino-acid chain; its full sequence is uncharacterized protein (560 aa).

Residues 1–281 (MLWNWVALVG…LGSFFHVAMN (281 aa)) form the ABC transmembrane type-1 domain. 7 helical membrane passes run 2-22 (LWNWVALVGGIISAVVFSYIL), 32-52 (LLSAVILGIVLIAALALRAFA), 108-128 (IYFGRYLPQLFYSLLAPLTLF), 138-160 (TAIILLICVPLIPMSIIAVNKIA), 168-188 (WSIYVGLGSSFLDNLQGLITL), 223-243 (VSLMDLLAYGGAAIGILTALL), and 249-269 (QLSVLGVILFILLSSEFFIPL). Positions 314-547 (VEIKDLHFSY…QGAYAEMFQQ (234 aa)) constitute an ABC transporter domain. 347–354 (GKSGCGKS) is an ATP binding site.

It belongs to the ABC transporter superfamily.

It localises to the cell inner membrane. This is an uncharacterized protein from Haemophilus influenzae (strain ATCC 51907 / DSM 11121 / KW20 / Rd).